Here is a 395-residue protein sequence, read N- to C-terminus: Dihydroorotate dehydrogenase (quinone), mitochondrial (395 aa).

The transit peptide at 1–10 (MAWRQLKKRA) directs the protein to the mitochondrion; not cleaved. Residues 1 to 10 (MAWRQLKKRA) lie on the Mitochondrial matrix side of the membrane. Residues 11–30 (QDAMVILGGGGLLFASYLTA) traverse the membrane as a helical segment. At 31-395 (TGDEHFYAEL…TDAIGADHRR (365 aa)) the chain is on the mitochondrial intermembrane side. Residues 95–99 (AGFDK) and Ser-119 contribute to the FMN site. Lys-99 serves as a coordination point for substrate. 144–148 (NRYGF) provides a ligand contact to substrate. Asn-180 and Asn-211 together coordinate FMN. 211–216 (NVSSPN) is a binding site for substrate. Residue Ser-214 is the Nucleophile of the active site. FMN contacts are provided by Lys-254 and Thr-282. 283–284 (NS) lines the substrate pocket. Residues Gly-305, Gly-334, and 355–356 (YT) each bind FMN.

The protein belongs to the dihydroorotate dehydrogenase family. Type 2 subfamily. Monomer. FMN is required as a cofactor. In terms of processing, the uncleaved transit peptide is required for mitochondrial targeting and proper membrane integration.

It is found in the mitochondrion inner membrane. It catalyses the reaction (S)-dihydroorotate + a quinone = orotate + a quinol. The protein operates within pyrimidine metabolism; UMP biosynthesis via de novo pathway; orotate from (S)-dihydroorotate (quinone route): step 1/1. In terms of biological role, catalyzes the conversion of dihydroorotate to orotate with quinone as electron acceptor. Required for UMP biosynthesis via de novo pathway. The sequence is that of Dihydroorotate dehydrogenase (quinone), mitochondrial (DHODH) from Bos taurus (Bovine).